We begin with the raw amino-acid sequence, 620 residues long: Chaperone protein HscA homolog (620 aa).

Belongs to the heat shock protein 70 family.

In terms of biological role, chaperone involved in the maturation of iron-sulfur cluster-containing proteins. Has a low intrinsic ATPase activity which is markedly stimulated by HscB. This is Chaperone protein HscA homolog from Shewanella oneidensis (strain ATCC 700550 / JCM 31522 / CIP 106686 / LMG 19005 / NCIMB 14063 / MR-1).